We begin with the raw amino-acid sequence, 314 residues long: Transcription factor SOX-12 (314 aa).

Disordered regions lie at residues 1–40 and 101–287; these read MVQQ…SGHI and MADY…FEFP. The segment at residues 40–108 is a DNA-binding region (HMG box); the sequence is IKRPMNAFMV…KHMADYPDYK (69 aa). The segment covering 149–159 has biased composition (gly residues); that stretch reads RASGGPLGGGA. A compositionally biased stretch (acidic residues) spans 162-173; it reads PEDDDEDEEEEL. The span at 174–187 shows a compositional bias: basic and acidic residues; sequence LEVRLLETPGRELW. Positions 191–217 are enriched in low complexity; it reads PAGRAARGPAERAQGPSGEGAAASAAS. The span at 221 to 243 shows a compositional bias: acidic residues; that stretch reads SEDEEPEEEEEEAATAEEGEEET. Residues 282–314 form a required for transcriptional activation activity and synergistic coactivation of transcriptional activity with POU3F2 region; that stretch reads SHFEFPDYCTPEVTEMIAGDWRSSSIADLVFTY.

Expressed in splenic and thymic regulatory T-cells (at protein level). Expressed in embryonic molar and incisor teeth.

Its subcellular location is the nucleus. Functionally, transcription factor that binds to DNA at the consensus sequence 5'-ACCAAAG-3'. Acts as a transcriptional activator. Binds cooperatively with POU3F2/BRN2 or POU3F1/OCT6 to gene promoters, which enhances transcriptional activation. Involved in the differentiation of naive CD4-positive T-cells into peripherally induced regulatory T (pT reg) cells under inflammatory conditions. Binds to the promoter region of the FOXP3 gene and promotes its transcription, and might thereby contribute to pT reg cell differentiation in the spleen and lymph nodes during inflammation. Plays a redundant role with SOX4 and SOX11 in cell survival of developing tissues such as the neural tube, branchial arches and somites, thereby contributing to organogenesis. The polypeptide is Transcription factor SOX-12 (Sox12) (Mus musculus (Mouse)).